A 323-amino-acid chain; its full sequence is Fructose-bisphosphate aldolase (323 aa).

Ser50 contacts beta-D-fructose 1,6-bisphosphate. Asp83 functions as the Proton donor in the catalytic mechanism. His84 and His178 together coordinate Zn(2+). 3 residues coordinate beta-D-fructose 1,6-bisphosphate: His178, Gly179, and Lys182. His210 contributes to the Zn(2+) binding site. Residues Gly211, Ser213, Asn253, Asp255, Ser256, Arg259, and Arg280 each contribute to the beta-D-fructose 1,6-bisphosphate site.

Belongs to the class II fructose-bisphosphate aldolase family. As to quaternary structure, homodimer. It depends on Zn(2+) as a cofactor.

The catalysed reaction is beta-D-fructose 1,6-bisphosphate = D-glyceraldehyde 3-phosphate + dihydroxyacetone phosphate. It functions in the pathway carbohydrate degradation; glycolysis; D-glyceraldehyde 3-phosphate and glycerone phosphate from D-glucose: step 4/4. Functionally, plays a key role in glycolysis by catalyzing the cleavage of fructose 1,6-bisphosphate into dihydroxyacetone phosphate and glyceraldehyde 3-phosphate. Does not cleave D-tagatose-1,6-bisphosphate. This Giardia intestinalis (strain ATCC 50803 / WB clone C6) (Giardia lamblia) protein is Fructose-bisphosphate aldolase.